We begin with the raw amino-acid sequence, 2479 residues long: Centrosomal protein of 290 kDa (2479 aa).

The self-association (with itself or C-terminus) stretch occupies residues 1–695 (MPPNINWKEI…IESKNAEGIF (695 aa)). Coiled coils occupy residues 59–565 (MKMK…ERGK), 598–664 (SLKN…MQKD), 697–931 (ASLH…VCEK), 958–1027 (SLSE…IEQA), 1071–1498 (QRAE…ILSR), 1533–1584 (HTLK…LHIL), and 1635–2452 (DSLS…SEQL). Basic and acidic residues predominate over residues 149 to 163 (ALRNEEAENENSKLR). A disordered region spans residues 149-168 (ALRNEEAENENSKLRRENKR). Residues 696-896 (DASLHLKAQV…TVLQVNEKSL (201 aa)) form an interaction with IQCB1 region. Residues 1966-2479 (TTGMTVDQVL…EESPVNFPIY (514 aa)) are self-association (with itself or N-terminus). The interval 2458–2479 (SPVAASEEFEDEEESPVNFPIY) is disordered.

As to quaternary structure, part of the tectonic-like complex (also named B9 complex). Interacts with ATF4 via its N-terminal region. Associates with the BBSome complex, interacting (via N-terminus) with BBS4. Interacts with IQCB1/NPHP5; IQCB1 and CEP290/NPHP6 are proposed to form a functional NPHP5-6 module localized to the centrosome. Interacts with NPHP4; the interaction likely requires additional interactors. Interacts with ZNF423, FAM161A, CEP162, CEP162, CEP131, TALPID3, CCDC13, CC2D2A, RPGRIP1. Can self-associate (homo- or heteromeric). Interacts with CCP110; required for suppressing cilia formation. Interacts with RPGR. Associates (via C-terminus) with microtubules; association to microtubule is reduced in response to cellular stress, such as ultraviolet light (UV) radiation or heat shock, in a process that requires p38 MAP kinase signaling. Interacts with FAM161A. Interacts with PCM1. Interacts with CCDC66. Interacts with ARMC9 and CSPP1. Post-translationally, ubiquitinated. May undergo monoubiquitination; monoubiquitination is inhibited in response to cellular stress, such as ultraviolet light (UV) radiation or heat shock, but does not cause its displacement from centriolar satellites. As to expression, ubiquitous. Expressed strongly in placenta and weakly in brain.

Its subcellular location is the cytoplasm. The protein resides in the cytoskeleton. It is found in the microtubule organizing center. It localises to the centrosome. The protein localises to the centriolar satellite. Its subcellular location is the nucleus. The protein resides in the cell projection. It is found in the cilium. It localises to the cilium basal body. The protein localises to the centriole. Its subcellular location is the cytoplasmic vesicle. Its function is as follows. Involved in early and late steps in cilia formation. Its association with CCP110 is required for inhibition of primary cilia formation by CCP110. May play a role in early ciliogenesis in the disappearance of centriolar satellites and in the transition of primary ciliar vesicles (PCVs) to capped ciliary vesicles (CCVs). Required for the centrosomal recruitment of RAB8A and for the targeting of centriole satellite proteins to centrosomes such as of PCM1. Required for the correct localization of ciliary and phototransduction proteins in retinal photoreceptor cells; may play a role in ciliary transport processes. Required for efficient recruitment of RAB8A to primary cilium. In the ciliary transition zone is part of the tectonic-like complex which is required for tissue-specific ciliogenesis and may regulate ciliary membrane composition. Involved in regulation of the BBSome complex integrity, specifically for presence of BBS2, BBS5 and BBS8/TTC8 in the complex, and in ciliary targeting of selected BBSome cargos. May play a role in controlling entry of the BBSome complex to cilia possibly implicating IQCB1/NPHP5. Activates ATF4-mediated transcription. This is Centrosomal protein of 290 kDa (CEP290) from Homo sapiens (Human).